The sequence spans 351 residues: Phenylalanine--tRNA ligase alpha subunit (351 aa).

Positions 45-69 (LGDDAPIPAARRSLGSLPKDQRKDA) are disordered. Residue E269 coordinates Mg(2+).

It belongs to the class-II aminoacyl-tRNA synthetase family. Phe-tRNA synthetase alpha subunit type 1 subfamily. As to quaternary structure, tetramer of two alpha and two beta subunits. It depends on Mg(2+) as a cofactor.

It localises to the cytoplasm. The catalysed reaction is tRNA(Phe) + L-phenylalanine + ATP = L-phenylalanyl-tRNA(Phe) + AMP + diphosphate + H(+). The sequence is that of Phenylalanine--tRNA ligase alpha subunit from Corynebacterium jeikeium (strain K411).